A 272-amino-acid chain; its full sequence is Probable proteasome subunit beta type-5 (272 aa).

A propeptide spans 1–61 (MNSIVSKYTQ…KHCLIKMNHG (61 aa)) (removed in mature form). Threonine 62 (nucleophile) is an active-site residue.

Belongs to the peptidase T1B family. In terms of assembly, the 26S proteasome consists of a 20S proteasome core and two 19S regulatory subunits. The 20S proteasome core is composed of 28 subunits that are arranged in four stacked rings, resulting in a barrel-shaped structure. The two end rings are each formed by seven alpha subunits, and the two central rings are each formed by seven beta subunits. The catalytic chamber with the active sites is on the inside of the barrel.

It is found in the cytoplasm. It localises to the nucleus. It carries out the reaction Cleavage of peptide bonds with very broad specificity.. In terms of biological role, the proteasome is a multicatalytic proteinase complex which is characterized by its ability to cleave peptides with Arg, Phe, Tyr, Leu, and Glu adjacent to the leaving group at neutral or slightly basic pH. The proteasome has an ATP-dependent proteolytic activity. The chain is Probable proteasome subunit beta type-5 (pts1) from Schizosaccharomyces pombe (strain 972 / ATCC 24843) (Fission yeast).